Here is a 585-residue protein sequence, read N- to C-terminus: Suppressor of mec-8 and unc-52 protein homolog 2 (585 aa).

Over residues methionine 1–arginine 14 the composition is skewed to basic residues. Disordered stretches follow at residues methionine 1–histidine 52 and lysine 219–lysine 324. A compositionally biased stretch (basic and acidic residues) spans arginine 15–glutamine 39. 4 R-[ED] repeats span residues arginine 16–glutamate 17, arginine 29–aspartate 30, arginine 36–glutamate 37, and arginine 258–glutamate 259. The segment covering leucine 276–threonine 288 has biased composition (basic and acidic residues). R-[ED] repeat units follow at residues arginine 322–aspartate 323, arginine 436–aspartate 437, arginine 445–glutamate 446, arginine 450–glutamate 451, arginine 540–aspartate 541, and arginine 542–aspartate 543. The segment at phenylalanine 523–histidine 585 is disordered. Residues glutamine 530–asparagine 548 are compositionally biased toward basic and acidic residues. The residue at position 579 (threonine 579) is a Phosphothreonine.

The protein belongs to the RED family. Component of the spliceosome. Interacts with SMU1. Highly expressed in seedlings at 7 days after germination, young flowers before anthesis and developing siliques. Expressed at lower levels in roots, expanding leaves, open flowers, dry seeds and inflorescences. Not detected in senescing leaves.

It is found in the nucleus. In terms of biological role, auxiliary spliceosomal protein involved in splicing of specific pre-mRNAs that affect multiple aspects of development. This chain is Suppressor of mec-8 and unc-52 protein homolog 2 (SMU2), found in Arabidopsis thaliana (Mouse-ear cress).